A 146-amino-acid chain; its full sequence is D-aminoacyl-tRNA deacylase (146 aa).

The Gly-cisPro motif, important for rejection of L-amino acids signature appears at G137 to P138.

It belongs to the DTD family. In terms of assembly, homodimer.

It is found in the cytoplasm. The catalysed reaction is glycyl-tRNA(Ala) + H2O = tRNA(Ala) + glycine + H(+). It carries out the reaction a D-aminoacyl-tRNA + H2O = a tRNA + a D-alpha-amino acid + H(+). Its function is as follows. An aminoacyl-tRNA editing enzyme that deacylates mischarged D-aminoacyl-tRNAs. Also deacylates mischarged glycyl-tRNA(Ala), protecting cells against glycine mischarging by AlaRS. Acts via tRNA-based rather than protein-based catalysis; rejects L-amino acids rather than detecting D-amino acids in the active site. By recycling D-aminoacyl-tRNA to D-amino acids and free tRNA molecules, this enzyme counteracts the toxicity associated with the formation of D-aminoacyl-tRNA entities in vivo and helps enforce protein L-homochirality. In Bacillus cereus (strain ATCC 14579 / DSM 31 / CCUG 7414 / JCM 2152 / NBRC 15305 / NCIMB 9373 / NCTC 2599 / NRRL B-3711), this protein is D-aminoacyl-tRNA deacylase.